The following is a 218-amino-acid chain: Glutathione S-transferase (218 aa).

One can recognise a GST N-terminal domain in the interval 3–88 (SKPVLGYWDI…YIGRKYKLTG (86 aa)). Residues 9–10 (YW), 43–46 (RSAW), lysine 50, 59–60 (NL), and 72–73 (QT) contribute to the glutathione site. A GST C-terminal domain is found at 90–206 (NEPEELRVSL…YIKAQQPKLF (117 aa)). Substrate is bound at residue tyrosine 116.

It belongs to the GST superfamily. Mu family.

The enzyme catalyses RX + glutathione = an S-substituted glutathione + a halide anion + H(+). In terms of biological role, conjugation of reduced glutathione to a wide number of exogenous and endogenous hydrophobic electrophiles. This is Glutathione S-transferase from Tyrophagus putrescentiae (Mold mite).